Reading from the N-terminus, the 625-residue chain is tRNA uridine 5-carboxymethylaminomethyl modification enzyme MnmG (625 aa).

FAD-binding positions include 11–16 (GAGHAG), V123, and S178. 271–285 (GPRYCPSIETKIVTF) serves as a coordination point for NAD(+). Q368 serves as a coordination point for FAD.

This sequence belongs to the MnmG family. As to quaternary structure, homodimer. Heterotetramer of two MnmE and two MnmG subunits. The cofactor is FAD.

It localises to the cytoplasm. Functionally, NAD-binding protein involved in the addition of a carboxymethylaminomethyl (cmnm) group at the wobble position (U34) of certain tRNAs, forming tRNA-cmnm(5)s(2)U34. The chain is tRNA uridine 5-carboxymethylaminomethyl modification enzyme MnmG from Bacteroides fragilis (strain YCH46).